We begin with the raw amino-acid sequence, 113 residues long: U11-theraphotoxin-Hhn1s (113 aa).

The N-terminal stretch at 1-21 is a signal peptide; the sequence is MNTVRVTFLLVFVLAVSLGQA. A propeptide spanning residues 22 to 74 is cleaved from the precursor; it reads DKDENRMEMQEKTEQGKSYLDFAENLLLQKLEELEAKLLEEDSEESRNSRQKR. Residues 61 to 83 form a disordered region; it reads EEDSEESRNSRQKRCIGEGVPCD. 3 cysteine pairs are disulfide-bonded: C75–C90, C82–C95, and C89–C110.

It belongs to the neurotoxin 14 (magi-1) family. 01 (HNTX-16) subfamily. In terms of tissue distribution, expressed by the venom gland.

It localises to the secreted. Its function is as follows. Probable ion channel inhibitor. This is U11-theraphotoxin-Hhn1s from Cyriopagopus hainanus (Chinese bird spider).